Here is a 1696-residue protein sequence, read N- to C-terminus: uncharacterized protein (1696 aa).

Disordered stretches follow at residues 1 to 113 (MDSS…HPQY), 151 to 194 (DSWT…SRSR), 258 to 284 (DVTR…PEKK), and 299 to 376 (GRRE…KQRG). The segment covering 21 to 42 (LHPPSAPLPPPPPLPPPPPPRQ) has biased composition (pro residues). Positions 52-61 (GRSTQSNGQR) are enriched in polar residues. The span at 96–113 (QQQHQPLSLQQQQQHPQY) shows a compositional bias: low complexity. The segment covering 170-183 (RNYQYDYSRNSSGV) has biased composition (polar residues). 3 stretches are compositionally biased toward basic and acidic residues: residues 267-284 (EGAR…PEKK), 325-340 (ETPR…EWSR), and 358-376 (RGKE…KQRG). Serine 378 bears the Phosphoserine mark. Disordered regions lie at residues 419–483 (RALL…GGKL), 688–724 (SDIG…LDSP), 1063–1090 (IKHK…GGTS), 1184–1211 (TSKS…VAGS), 1319–1340 (GEAV…SGVR), 1361–1429 (VVSV…SDAS), and 1658–1696 (SESR…DSGM). 2 stretches are compositionally biased toward basic and acidic residues: residues 421–436 (LLSD…ERNG) and 695–704 (DDNKRIDKNV). Position 708 is a phosphoserine (serine 708). Over residues 1184-1204 (TSKSIEKIESSGGTSEHRTPE) the composition is skewed to basic and acidic residues. Residues 1361–1370 (VVSVPHRDPQ) show a composition bias toward basic and acidic residues. Polar residues-rich tracts occupy residues 1389–1398 (NYSTQKSYPS), 1658–1667 (SESRCNQSIS), and 1677–1696 (SAAN…DSGM).

This is an uncharacterized protein from Arabidopsis thaliana (Mouse-ear cress).